A 66-amino-acid polypeptide reads, in one-letter code: uncharacterized protein (66 aa).

The tract at residues 1–20 (MIALAYLATVAIAAMVLAVA) is hydrophobic.

This is an uncharacterized protein from Streptomyces lividans.